We begin with the raw amino-acid sequence, 509 residues long: MAQPNVQSTSEPILSENDLIAQRHAKLKQIQDKAKETGKSVWPNTFKREHYAADLQEQFKDIDKAQIEGSDKTYVKVAGRVMLNRGSFMVIQDMTGRIQLYVDRKGLPADTLETIKSLDLGDIIAAEGYIGRSGKGDLYVHLEGFELLTKSLRPLPDKFHGLTDTEAKYRKRYLDLIVNEETRKTFEIRAQVVAGIRAFLTNQRFMEVETPMMHVIPGGASAQPFVTHHNALDMELYLRIAPELYLKRLVVGGFERVFEINRNFRNEGVSTRHNPEFTMIEFYQAYADYKDLMQLTENMLEKLALDILGTTDVPYGDEVYSFKGPFKKISMFDAILEHNPDFTPENVNDREFLAKFTQDVLKEQVKPGFGLGKLQTIVFEETVETKLRQPTFITEYPAETSPLARRNDDNPHITDRFEFFIGGRELANGFSELNDPIDQAERFQAQVAEKDAGDDEAMHYDADFIEALEYGLPPTAGQGIGIDRLVMIFANAPSIRDVLLFPHMRRKDV.

2 residues coordinate Mg(2+): E418 and E425.

It belongs to the class-II aminoacyl-tRNA synthetase family. Homodimer. Mg(2+) is required as a cofactor.

Its subcellular location is the cytoplasm. The catalysed reaction is tRNA(Lys) + L-lysine + ATP = L-lysyl-tRNA(Lys) + AMP + diphosphate. This is Lysine--tRNA ligase (lysS) from Acinetobacter baylyi (strain ATCC 33305 / BD413 / ADP1).